The primary structure comprises 333 residues: Forkhead box protein unc-130 (333 aa).

The tract at residues 1–126 is disordered; that stretch reads MLFSMESILS…MSGHRKSSHA (126 aa). The segment covering 14–24 has biased composition (basic and acidic residues); that stretch reads PKLEPPPKLEP. The span at 37–50 shows a compositional bias: polar residues; it reads RSNTRLSEPSTSAS. The span at 52–62 shows a compositional bias: basic and acidic residues; the sequence is LEHDLKFGESR. Residues 98-110 show a composition bias toward acidic residues; the sequence is SSDDAKDDDDDDD. The segment at residues 127 to 221 is a DNA-binding region (fork-head); the sequence is KPPYSYIALI…DNGSFLRRRK (95 aa). The interval 304 to 333 is disordered; it reads APVSSGQKRTSSSSSPNENGSSAVSDKLSA. Over residues 307–333 the composition is skewed to low complexity; the sequence is SSGQKRTSSSSSPNENGSSAVSDKLSA.

In terms of tissue distribution, expressed in ventral body wall muscle. Expressed in the structural cells and two neurons of each ray in the male tail.

It is found in the nucleus. Its function is as follows. Probable transcription factor. Binds to DNA sequence motif 5'-CTGTTTCA-3'. Required for the migration of distal tip cells (DTC) and axonal growth-cones along the dorsal-ventral axis of the body wall, acting by cell autonomous repression of unc-129/TGF-beta expression in ventral body muscle during embyogenesis. Binds to the promoter region of the unc-129 gene. Plays a role in dorsal-ventral patterning and fate specification of the postembryonic mesoderm. Involved in male tail morphogenesis and in embryogenesis. Plays a role in the development of sensory neurons and is required to repress AWA fate and promote ASG fate in the ASG chemosensory neurons. Regulates expression of a class of small RNAs, known as 21U-RNAs. This Caenorhabditis elegans protein is Forkhead box protein unc-130.